A 144-amino-acid polypeptide reads, in one-letter code: 3-hydroxyacyl-[acyl-carrier-protein] dehydratase FabZ (144 aa).

The active site involves H51.

This sequence belongs to the thioester dehydratase family. FabZ subfamily.

Its subcellular location is the cytoplasm. It catalyses the reaction a (3R)-hydroxyacyl-[ACP] = a (2E)-enoyl-[ACP] + H2O. Its function is as follows. Involved in unsaturated fatty acids biosynthesis. Catalyzes the dehydration of short chain beta-hydroxyacyl-ACPs and long chain saturated and unsaturated beta-hydroxyacyl-ACPs. This chain is 3-hydroxyacyl-[acyl-carrier-protein] dehydratase FabZ (fabZ2), found in Lactococcus lactis subsp. lactis (strain IL1403) (Streptococcus lactis).